The sequence spans 199 residues: Recombination protein RecR (199 aa).

A C4-type zinc finger spans residues 57–72 (CSVCGNITEDDPCPIC). Residues 80 to 176 (SRVLVVERSR…KVTRLAHGLS (97 aa)) form the Toprim domain.

This sequence belongs to the RecR family.

Its function is as follows. May play a role in DNA repair. It seems to be involved in an RecBC-independent recombinational process of DNA repair. It may act with RecF and RecO. The chain is Recombination protein RecR from Limosilactobacillus fermentum (strain NBRC 3956 / LMG 18251) (Lactobacillus fermentum).